A 192-amino-acid chain; its full sequence is Fe/S biogenesis protein NfuA (192 aa).

The [4Fe-4S] cluster site is built by cysteine 149 and cysteine 152.

This sequence belongs to the NfuA family. As to quaternary structure, homodimer. Requires [4Fe-4S] cluster as cofactor.

Its function is as follows. Involved in iron-sulfur cluster biogenesis. Binds a 4Fe-4S cluster, can transfer this cluster to apoproteins, and thereby intervenes in the maturation of Fe/S proteins. Could also act as a scaffold/chaperone for damaged Fe/S proteins. The sequence is that of Fe/S biogenesis protein NfuA from Shewanella sp. (strain ANA-3).